The chain runs to 238 residues: Uridylate kinase (238 aa).

12-15 (KLSG) contacts ATP. Residue Gly-54 participates in UMP binding. Positions 55 and 59 each coordinate ATP. Residues Asp-74 and 135–142 (VGAPYFTT) each bind UMP. Thr-162, Tyr-168, and Asp-171 together coordinate ATP.

This sequence belongs to the UMP kinase family. As to quaternary structure, homohexamer.

The protein localises to the cytoplasm. The enzyme catalyses UMP + ATP = UDP + ADP. Its pathway is pyrimidine metabolism; CTP biosynthesis via de novo pathway; UDP from UMP (UMPK route): step 1/1. Its activity is regulated as follows. Inhibited by UTP. Catalyzes the reversible phosphorylation of UMP to UDP. The sequence is that of Uridylate kinase from Erythrobacter litoralis (strain HTCC2594).